The primary structure comprises 61 residues: Ubiquinol-cytochrome c reductase complex assembly factor 6 (61 aa).

The Mitochondrial matrix segment spans residues 1-9 (MPAGVSWGQ). Residues 10-32 (YLKFLGCALASMMAGSQAVHLYY) traverse the membrane as a helical segment. The Mitochondrial intermembrane portion of the chain corresponds to 33-61 (KPLEDLRVYIEQEQHSTQVDPTAKPPESA).

Belongs to the UQCC6 family. Interacts with sloth1; the interaction stabilizes both components. Expressed in the brain.

Its subcellular location is the mitochondrion inner membrane. The protein localises to the mitochondrion. In terms of biological role, required for the assembly and stability of the mitochondrial ubiquinol-cytochrome c reductase complex (complex III (CIII) or cytochrome b-c1 complex), a multisubunit transmembrane complex that is part of the mitochondrial electron transport chain (ETC) which drives oxidative phosphorylation. The sequence is that of Ubiquinol-cytochrome c reductase complex assembly factor 6 from Drosophila melanogaster (Fruit fly).